A 1136-amino-acid polypeptide reads, in one-letter code: Mitochondrial 3' processome subunit 3 (1136 aa).

The N-terminal 97 residues, 1-97 (MKKAWAQLER…RGLVCTTVGD (97 aa)), are a transit peptide targeting the mitochondrion.

In terms of assembly, component of the mitochondrial 3' processome (MPsome) complex composed at least of terminal uridylyltransferase KRET1/TUT1, 3'-5' exonuclease DSS1, MPSS1, MPSS2 and MPSS3. Within the complex, interacts with KRET1.

Its subcellular location is the mitochondrion. Its function is as follows. As part of the mitochondrial 3' processome (MPsome), involved in the maturation of guided RNA (gRNA) precursors. This is Mitochondrial 3' processome subunit 3 from Trypanosoma brucei brucei.